A 420-amino-acid chain; its full sequence is Outer capsid protein P8 (420 aa).

Belongs to the phytoreovirus outer capsid protein P8 family. As to quaternary structure, homotrimer. Homomultimer. Interacts with host peroxisomal glycolate oxidase (GOX). This interaction mediates its relocation to virus factories peripheral to host peroxisomes.

Its subcellular location is the virion. The protein localises to the host cytoplasm. In terms of biological role, capsid protein which self-assembles to form the outer icosahedral capsid with a T=13 symmetry, about 70 nm in diameter and consisting of 780 molecules capsid proteins. The sequence is that of Outer capsid protein P8 from Alopecurus aequalis (Barnyard grass).